Reading from the N-terminus, the 82-residue chain is uncharacterized protein (82 aa).

The segment at 22–82 (LRRSRSSRNG…WPPPCAFTPG (61 aa)) is disordered. Over residues 47–58 (HRGEPGHPRMEE) the composition is skewed to basic and acidic residues. The segment covering 73–82 (WPPPCAFTPG) has biased composition (pro residues).

This is an uncharacterized protein from Homo sapiens (Human).